Consider the following 153-residue polypeptide: Transcriptional repressor NrdR (153 aa).

Residues 3–34 (CPYCNADDTKVIDSRLAAEGAQVRRRRQCNQC) fold into a zinc finger. The ATP-cone domain occupies 49–139 (PRIIKSNGRI…VYRDFQDIEA (91 aa)).

Belongs to the NrdR family. It depends on Zn(2+) as a cofactor.

In terms of biological role, negatively regulates transcription of bacterial ribonucleotide reductase nrd genes and operons by binding to NrdR-boxes. The polypeptide is Transcriptional repressor NrdR (Psychrobacter sp. (strain PRwf-1)).